Here is a 221-residue protein sequence, read N- to C-terminus: Phosphoglycolate phosphatase (221 aa).

Residue D7 is the Nucleophile of the active site. Residues D7 and D9 each contribute to the Mg(2+) site. K148 lines the substrate pocket. Mg(2+) is bound by residues D171 and D175.

The protein belongs to the archaeal SPP-like hydrolase family. Requires Mg(2+) as cofactor.

The catalysed reaction is 2-phosphoglycolate + H2O = glycolate + phosphate. In terms of biological role, catalyzes the dephosphorylation of 2-phosphoglycolate. This chain is Phosphoglycolate phosphatase, found in Methanothermobacter thermautotrophicus (strain ATCC 29096 / DSM 1053 / JCM 10044 / NBRC 100330 / Delta H) (Methanobacterium thermoautotrophicum).